The sequence spans 431 residues: Sorting nexin-31 (431 aa).

Positions 1-107 constitute a PX domain; sequence MHICIPVTEE…DYFRKLQMDT (107 aa).

This sequence belongs to the sorting nexin family.

In terms of biological role, may be involved in protein trafficking. The polypeptide is Sorting nexin-31 (snx31) (Xenopus laevis (African clawed frog)).